The following is a 367-amino-acid chain: Germination protease (367 aa).

Positions 1-15 (MKEPLDLSKYSVRTD) are excised as a propeptide.

The protein belongs to the peptidase A25 family. In terms of assembly, homotetramer. Post-translationally, autoproteolytically processed. The inactive tetrameric zymogen termed p46 autoprocesses to a smaller form termed p41, which is active only during spore germination.

It carries out the reaction Endopeptidase action with P4 Glu or Asp, P1 preferably Glu &gt; Asp, P1' hydrophobic and P2' Ala.. In terms of biological role, initiates the rapid degradation of small, acid-soluble proteins during spore germination. This is Germination protease from Bacillus cereus (strain G9842).